A 140-amino-acid polypeptide reads, in one-letter code: UPF0299 membrane protein CGSHiGG_01475 (140 aa).

The next 4 helical transmembrane spans lie at 1 to 21 (MIQKLFLLVRSLVILSIMLYL), 33 to 52 (VPGSIWGLLLLFLGLTTRVI), 60 to 80 (GASLLIRFMAVLFVPVSVGII), and 92 to 112 (ILLVPNIVSTCVTLLVIGFLG).

The protein belongs to the UPF0299 family.

It localises to the cell inner membrane. The chain is UPF0299 membrane protein CGSHiGG_01475 from Haemophilus influenzae (strain PittGG).